Here is an 866-residue protein sequence, read N- to C-terminus: Rifampicin phosphotransferase (866 aa).

An ATP-binding region spans residues 1-313; the sequence is MSSLVLGLHE…FYIVQSRPIT (313 aa). Positions 22, 116, 131, 135, 182, 296, 308, and 310 each coordinate ATP. The tract at residues 326–754 is rifampicin-binding; that stretch reads NHVYISVGHQ…TSDGEIVTGE (429 aa). A disordered region spans residues 410–429; sequence IPNDKTAPNPSRGNADMPAQ. The swivel phosphohistidine stretch occupies residues 767–865; sequence GLPVSSGVIE…VHGTEGYIEI (99 aa). His825 (tele-phosphohistidine intermediate) is an active-site residue.

Belongs to the rifampicin phosphotransferase family.

It catalyses the reaction rifampicin + ATP + H2O = 21-phosphorifampicin + AMP + phosphate + 2 H(+). Functionally, catalyzes the phosphorylation of rifampicin, also known as rifampin (RIF), leading to its inactivation. The polypeptide is Rifampicin phosphotransferase (Bacillus subtilis (strain 168)).